The chain runs to 257 residues: 8-demethyl-8-aminoriboflavin-5'-phosphate synthase (257 aa).

FMN contacts are provided by residues 11 to 13 (TLR), 19 to 21 (SQT), 91 to 94 (ITLN), 132 to 136 (CGNED), and Y240.

Belongs to the SsuE family. In terms of assembly, homotetramer.

It carries out the reaction FMN + L-glutamate + 3 A + O2 + H2O = 8-amino-8-demethylriboflavin 5'-phosphate + 2-oxoglutarate + 3 AH2 + CO2 + H(+). It functions in the pathway antibiotic biosynthesis. In terms of biological role, involved in the biosynthesis of the riboflavin analog antibiotic roseoflavin (3,8-dimethylamino-riboflavin). Catalyzes the site-specific substitution of the C-8 methyl group of riboflavin-5'-phosphate (FMN) by an amino group to yield 8-amino-8-demethylriboflavin 5'-phosphate, via a combined oxidation, decarboxylation and transamination reaction. The catalysis is initiated by an oxidation step in which the C-8 methyl group on the dimethylbenzene ring of FMN is converted to a formyl group to yield the 8-demethyl-8-formylriboflavin-5'-phosphate (OHC-RP) intermediate. In the presence of thiamine, the formyl group is oxidized into a carboxyl group to yield the 8-demethyl-8-carboxyriboflavin-5'-phosphate (HO2C-RP) intermediate. Finally, in the presence of L-glutamate as an amino donor, decarboxylation and aminotransfer occur, resulting in production of 8-demethyl-8-aminoriboflavin-5'-phosphate. Addition of NAD (but not NADP) to the reaction increases the yield 1.7-fold. The reaction also proceeds without the addition of any electron acceptor, and it is possible that molecular oxygen serves this role. This is 8-demethyl-8-aminoriboflavin-5'-phosphate synthase from Streptomyces davaonensis (strain DSM 101723 / JCM 4913 / KCC S-0913 / 768).